Consider the following 270-residue polypeptide: Putative pyruvate, phosphate dikinase regulatory protein (270 aa).

151 to 158 (GVSRTSKT) contributes to the ADP binding site.

Belongs to the pyruvate, phosphate/water dikinase regulatory protein family. PDRP subfamily.

The enzyme catalyses N(tele)-phospho-L-histidyl/L-threonyl-[pyruvate, phosphate dikinase] + ADP = N(tele)-phospho-L-histidyl/O-phospho-L-threonyl-[pyruvate, phosphate dikinase] + AMP + H(+). It catalyses the reaction N(tele)-phospho-L-histidyl/O-phospho-L-threonyl-[pyruvate, phosphate dikinase] + phosphate + H(+) = N(tele)-phospho-L-histidyl/L-threonyl-[pyruvate, phosphate dikinase] + diphosphate. Its function is as follows. Bifunctional serine/threonine kinase and phosphorylase involved in the regulation of the pyruvate, phosphate dikinase (PPDK) by catalyzing its phosphorylation/dephosphorylation. The protein is Putative pyruvate, phosphate dikinase regulatory protein of Streptococcus gordonii (strain Challis / ATCC 35105 / BCRC 15272 / CH1 / DL1 / V288).